The following is a 308-amino-acid chain: MAVAMDNAILENILRQVRPLIGQGKVADYIPALATVDGSRLGIAICTVDGQLFQAGDAQERFSIQSISKVLSLVVAMRHYSEEEIWQRVGKDPSGSPFNSLVQLEMEQGIPRNPFINAGALVVCDMLQGRLSAPRQRMLEVVRGLSGVSDISYDTVVARSEFEHSARNAAIAWLMKSFGNFHHDVTTVLQNYFHYCALKMSCVELARTFVFLANQGKAIHIDEPVVTPMQARQINALMATSGMYQNAGEFAWRVGLPAKSGVGGGIVAIVPHEMAIAVWSPELDDAGNSLAGIAVLEQLTKQLGRSVY.

The substrate site is built by Ser-66, Asn-117, Glu-161, Asn-168, Tyr-192, Tyr-244, and Val-262.

This sequence belongs to the glutaminase family. Homotetramer.

The catalysed reaction is L-glutamine + H2O = L-glutamate + NH4(+). This chain is Glutaminase 2, found in Escherichia coli O157:H7.